A 211-amino-acid polypeptide reads, in one-letter code: Probable nicotinate-nucleotide adenylyltransferase (211 aa).

Belongs to the NadD family.

The catalysed reaction is nicotinate beta-D-ribonucleotide + ATP + H(+) = deamido-NAD(+) + diphosphate. It functions in the pathway cofactor biosynthesis; NAD(+) biosynthesis; deamido-NAD(+) from nicotinate D-ribonucleotide: step 1/1. Its function is as follows. Catalyzes the reversible adenylation of nicotinate mononucleotide (NaMN) to nicotinic acid adenine dinucleotide (NaAD). The protein is Probable nicotinate-nucleotide adenylyltransferase of Cellvibrio japonicus (strain Ueda107) (Pseudomonas fluorescens subsp. cellulosa).